Consider the following 107-residue polypeptide: Small ribosomal subunit protein uS17 (107 aa).

Belongs to the universal ribosomal protein uS17 family. As to quaternary structure, part of the 30S ribosomal subunit.

One of the primary rRNA binding proteins, it binds specifically to the 5'-end of 16S ribosomal RNA. This Thermotoga petrophila (strain ATCC BAA-488 / DSM 13995 / JCM 10881 / RKU-1) protein is Small ribosomal subunit protein uS17.